We begin with the raw amino-acid sequence, 640 residues long: Auxin efflux carrier component 3 (640 aa).

Residues 1–7 (MISWHDL) lie on the Extracellular side of the membrane. Residues 8-28 (YTVLTAVIPLYVAMILAYGSV) traverse the membrane as a helical segment. At 29–38 (RWWKIFSPDQ) the chain is on the cytoplasmic side. The chain crosses the membrane as a helical span at residues 39–59 (CSGINRFVAIFAVPLLSFHFI). Val51 is a binding site for (indol-3-yl)acetate. Residues 60-71 (STNNPYAMNLRF) are Extracellular-facing. A helical transmembrane segment spans residues 72–92 (IAADTLQKIIMLSLLVLWANF). Residues 93 to 101 (TRSGSLEWS) lie on the Cytoplasmic side of the membrane. A helical membrane pass occupies residues 102 to 122 (ITIFSLSTLPNTLVMGIPLLI). (indol-3-yl)acetate contacts are provided by Asn112 and Leu114. The Extracellular segment spans residues 123-131 (AMYGEYSGS). A helical membrane pass occupies residues 132–152 (LMVQIVVLQCIIWYTLLLFLF). Tyr145 is a binding site for (indol-3-yl)acetate. Residues 153 to 500 (EFRGAKMLIM…LIRNPNTYSS (348 aa)) are Cytoplasmic-facing. A phosphoserine mark is found at Ser226, Ser243, and Ser283. The tract at residues 310–351 (APNPEFSSTTTSTANKSVNKNPKDVNTNQQTTLPTGGKSNSH) is disordered. Positions 314–348 (EFSSTTTSTANKSVNKNPKDVNTNQQTTLPTGGKS) are enriched in polar residues. Thr322 bears the Phosphothreonine mark. Ser366 carries the post-translational modification Phosphoserine. 2 disordered regions span residues 372–391 (AGLN…RSDQ) and 404–471 (SHNG…SQRK). The segment covering 430 to 442 (GKEEEAERPKDAE) has biased composition (basic and acidic residues). A compositionally biased stretch (polar residues) spans 449–460 (APNSTAALQSKT). A helical transmembrane segment spans residues 501 to 521 (LIGLIWALVAFRWHVAMPKII). Topologically, residues 522-524 (QQS) are extracellular. Residues 525-545 (ISILSDAGLGMAMFSLGLFMA) traverse the membrane as a helical segment. Residues 546-559 (LQPKLIACGNSVAT) lie on the Cytoplasmic side of the membrane. A helical membrane pass occupies residues 560–580 (FAMAVRFLTGPAVMAVAAIAI). At 581–585 (GLRGD) the chain is on the extracellular side. The helical transmembrane segment at 586 to 606 (LLRVAIVQAALPQGIVPFVFA) threads the bilayer. (indol-3-yl)acetate contacts are provided by Ile600 and Val601. The Cytoplasmic portion of the chain corresponds to 607 to 619 (KEYNVHPAILSTG). The helical transmembrane segment at 620-640 (VIFGMLIALPITLVYYILLGL) threads the bilayer.

This sequence belongs to the auxin efflux carrier (TC 2.A.69.1) family. Homodimer. Predominantly expressed at the lateral side of shoot endodermis cells as well as root pericycle and columella cells.

The protein localises to the cell membrane. Auxin efflux carrier activity is competitively inhibited by naptalamate (N-1-naphthylphthalamic acid, NPA). In terms of biological role, acts as a component of the auxin efflux carrier; this activity is enhanced when activated by PID-mediated phosphorylation. Seems to be involved in the lateral auxin transport system. Together with PIN4 and PIN7, involved in the connective auxin transport (CAT) that ensures communication across the shoot system, and modulates strigolactone-mediated shoot branching control. Binds auxins including indole-3-acetic acid (IAA). Coordinated polar localization of PIN3 is directly regulated by the vesicle trafficking process. The chain is Auxin efflux carrier component 3 from Arabidopsis thaliana (Mouse-ear cress).